Here is a 209-residue protein sequence, read N- to C-terminus: Protein-L-isoaspartate O-methyltransferase (209 aa).

The active site involves Ser60.

Belongs to the methyltransferase superfamily. L-isoaspartyl/D-aspartyl protein methyltransferase family.

Its subcellular location is the cytoplasm. It catalyses the reaction [protein]-L-isoaspartate + S-adenosyl-L-methionine = [protein]-L-isoaspartate alpha-methyl ester + S-adenosyl-L-homocysteine. In terms of biological role, catalyzes the methyl esterification of L-isoaspartyl residues in peptides and proteins that result from spontaneous decomposition of normal L-aspartyl and L-asparaginyl residues. It plays a role in the repair and/or degradation of damaged proteins. The polypeptide is Protein-L-isoaspartate O-methyltransferase (Photobacterium profundum (strain SS9)).